A 273-amino-acid polypeptide reads, in one-letter code: Dormancy associated translation inhibitor (273 aa).

As to quaternary structure, interacts with human TLR2.

Involved in translation regulation. Can also stimulate macrophages and peripheral blood mononuclear cells (PBMC) to secrete important cytokines that may be significant in granuloma formation and its maintenance. Increases secretion of IFN-gamma, TNF-alpha, IL-1 beta and IL-8 through human Toll-like receptor 2 (TLR2) signaling pathway. This Mycobacterium tuberculosis (strain CDC 1551 / Oshkosh) protein is Dormancy associated translation inhibitor.